Here is a 183-residue protein sequence, read N- to C-terminus: Adenine phosphoribosyltransferase (183 aa).

The protein belongs to the purine/pyrimidine phosphoribosyltransferase family. As to quaternary structure, homodimer.

The protein resides in the cytoplasm. The enzyme catalyses AMP + diphosphate = 5-phospho-alpha-D-ribose 1-diphosphate + adenine. The protein operates within purine metabolism; AMP biosynthesis via salvage pathway; AMP from adenine: step 1/1. Catalyzes a salvage reaction resulting in the formation of AMP, that is energically less costly than de novo synthesis. The chain is Adenine phosphoribosyltransferase from Photorhabdus laumondii subsp. laumondii (strain DSM 15139 / CIP 105565 / TT01) (Photorhabdus luminescens subsp. laumondii).